Reading from the N-terminus, the 343-residue chain is GTPase Obg (343 aa).

Positions 1–159 (MKFLDQAKVY…LNIWLRLKLI (159 aa)) constitute an Obg domain. The OBG-type G domain maps to 160–327 (ADAGLVGLPN…VLRALMTVIA (168 aa)). Residues 166 to 173 (GLPNAGKS), 191 to 195 (FTTLH), 212 to 215 (DIPG), 279 to 282 (SQVD), and 308 to 310 (SAV) contribute to the GTP site. Residues serine 173 and threonine 193 each contribute to the Mg(2+) site.

This sequence belongs to the TRAFAC class OBG-HflX-like GTPase superfamily. OBG GTPase family. Monomer. Mg(2+) is required as a cofactor.

Its subcellular location is the cytoplasm. In terms of biological role, an essential GTPase which binds GTP, GDP and possibly (p)ppGpp with moderate affinity, with high nucleotide exchange rates and a fairly low GTP hydrolysis rate. Plays a role in control of the cell cycle, stress response, ribosome biogenesis and in those bacteria that undergo differentiation, in morphogenesis control. The protein is GTPase Obg of Mesorhizobium japonicum (strain LMG 29417 / CECT 9101 / MAFF 303099) (Mesorhizobium loti (strain MAFF 303099)).